The following is a 153-amino-acid chain: Regulatory protein RecX (153 aa).

It belongs to the RecX family.

Its subcellular location is the cytoplasm. Its function is as follows. Modulates RecA activity. The protein is Regulatory protein RecX of Neisseria gonorrhoeae (strain ATCC 700825 / FA 1090).